Reading from the N-terminus, the 354-residue chain is MKEKLETLLAAIQPADQTLRQAIQAHLDDLTKPQGSLGRLEEIAQQYILATGQIHPSLPKKKICCFAGDHGVAAEGVSAFPAEVTPQMVYNMLHGGAAINVLSRHVGAELSVVDVGVNHDFADAPNLVQCKVKRGSANMAVGAAMSETETLQAILAGAELAFQAADAGYGLLGTGEMGIANTTPATALYAVLLNLPVEAITGRGTGIDDARLHHKIAVIERAIAVNAERCATPFGTLAALGGFEIAAITGFILGAAARRIPVVVDGFISSSGALVAMKMVPSVVDYLFFSHLSAEQGHGAVMEALGVRPMLSLDLRLGEGTGAALAMQLVDAALKIYNEMATFSGAQVSEKIEG.

Glu319 functions as the Proton acceptor in the catalytic mechanism.

Belongs to the CobT family.

The enzyme catalyses 5,6-dimethylbenzimidazole + nicotinate beta-D-ribonucleotide = alpha-ribazole 5'-phosphate + nicotinate + H(+). Its pathway is nucleoside biosynthesis; alpha-ribazole biosynthesis; alpha-ribazole from 5,6-dimethylbenzimidazole: step 1/2. Catalyzes the synthesis of alpha-ribazole-5'-phosphate from nicotinate mononucleotide (NAMN) and 5,6-dimethylbenzimidazole (DMB). The protein is Nicotinate-nucleotide--dimethylbenzimidazole phosphoribosyltransferase of Chlorobium chlorochromatii (strain CaD3).